The following is a 185-amino-acid chain: MLPEVCYKHFTIFGDELLKWNKIHNLTGASSIESVMENIFDSLYPLRFIDDFTSCMDIGSGGGFPAIPLAIAKPQSHFILIEPRNKRSCFLQNIIIQLELNNVQVRPIRIQDVPIAEVNNLDLITSRALMDAKELISLSRKFLKSEGYFLLYKGTRFRQETPSMSIEECFTRENRIYYYKHSRDL.

S-adenosyl-L-methionine is bound by residues Gly59, Phe64, 110–111, and Arg127; that span reads IQ.

It belongs to the methyltransferase superfamily. RNA methyltransferase RsmG family.

The protein resides in the cytoplasm. The catalysed reaction is guanosine(527) in 16S rRNA + S-adenosyl-L-methionine = N(7)-methylguanosine(527) in 16S rRNA + S-adenosyl-L-homocysteine. Its function is as follows. Specifically methylates the N7 position of guanine in position 527 of 16S rRNA. This chain is Ribosomal RNA small subunit methyltransferase G, found in Helicobacter hepaticus (strain ATCC 51449 / 3B1).